Reading from the N-terminus, the 217-residue chain is 3,4-dihydroxy-2-butanone 4-phosphate synthase (217 aa).

Residues 37 to 38 (RE), D42, 150 to 154 (RRGHT), and E174 each bind D-ribulose 5-phosphate. E38 contacts Mg(2+). H153 contributes to the Mg(2+) binding site.

The protein belongs to the DHBP synthase family. Homodimer. It depends on Mg(2+) as a cofactor. Mn(2+) is required as a cofactor.

It catalyses the reaction D-ribulose 5-phosphate = (2S)-2-hydroxy-3-oxobutyl phosphate + formate + H(+). The protein operates within cofactor biosynthesis; riboflavin biosynthesis; 2-hydroxy-3-oxobutyl phosphate from D-ribulose 5-phosphate: step 1/1. In terms of biological role, catalyzes the conversion of D-ribulose 5-phosphate to formate and 3,4-dihydroxy-2-butanone 4-phosphate. This chain is 3,4-dihydroxy-2-butanone 4-phosphate synthase, found in Pseudoalteromonas translucida (strain TAC 125).